A 104-amino-acid polypeptide reads, in one-letter code: Antitoxin HigA-2 (104 aa).

The HTH cro/C1-type domain maps to 45-98 (IVSIREQFNMSRGVFARLLHTSSRTLENWEQGRSVPNGQAVTLLKLVQRHPETL). Residues 56–75 (RGVFARLLHTSSRTLENWEQ) constitute a DNA-binding region (H-T-H motif).

Functionally, antitoxin component of a type II toxin-antitoxin (TA) system that counteracts the effect of the HigB-2 toxin. Binds to its own promoter and regulates transcription of the higB-2/higA-2 operon. The chain is Antitoxin HigA-2 (higA-2) from Vibrio cholerae serotype O1 (strain ATCC 39315 / El Tor Inaba N16961).